A 99-amino-acid polypeptide reads, in one-letter code: Integration host factor subunit alpha (99 aa).

Belongs to the bacterial histone-like protein family. As to quaternary structure, heterodimer of an alpha and a beta chain.

Its function is as follows. This protein is one of the two subunits of integration host factor, a specific DNA-binding protein that functions in genetic recombination as well as in transcriptional and translational control. The sequence is that of Integration host factor subunit alpha (ihfA) from Mannheimia haemolytica (Pasteurella haemolytica).